Consider the following 255-residue polypeptide: Menaquinol:cytochrome c reductase cytochrome c subunit (255 aa).

Transmembrane regions (helical) follow at residues W46–V62, V104–L124, and V137–V157. The Cytochrome c domain occupies D178–T253. The heme c site is built by C192, C195, and H196.

Belongs to the cytochrome b family. In terms of assembly, the main subunits of the menaquinol:cytochrome c complex are a Rieske-type iron-sulfur protein (QcrA), a cytochrome b (QcrB) and a cytochrome c (QcrC). Heme c is required as a cofactor.

It localises to the cell membrane. Functionally, component of the menaquinol:cytochrome c reductase complex. The chain is Menaquinol:cytochrome c reductase cytochrome c subunit (qcrC) from Bacillus subtilis (strain 168).